Here is a 705-residue protein sequence, read N- to C-terminus: Prolyl endopeptidase (705 aa).

The signal sequence occupies residues 1 to 20; the sequence is MKYNKLSVAVAAFAFAAVSA. Active-site charge relay system residues include Ser-556 and His-675.

Belongs to the peptidase S9A family. In terms of assembly, monomer.

The protein resides in the periplasm. The catalysed reaction is Hydrolysis of Pro-|-Xaa &gt;&gt; Ala-|-Xaa in oligopeptides.. Its function is as follows. Cleaves peptide bonds on the C-terminal side of prolyl residues within peptides that are up to approximately 30 amino acids long. Has an absolute requirement for an X-Pro bond in the trans configuration immediately preceding the Pro-Y scissible bond. This Elizabethkingia meningoseptica (Chryseobacterium meningosepticum) protein is Prolyl endopeptidase (f1pep1).